Consider the following 35-residue polypeptide: Small toxic polypeptide LdrB (35 aa).

Residues 10–30 (FWHDLAAPILAGIITAAIVGW) form a helical membrane-spanning segment.

This sequence belongs to the Ldr toxic peptide family.

The protein localises to the cell inner membrane. Functionally, toxic component of a type I toxin-antitoxin (TA) system. Overexpression causes rapid cell killing, probably by disrupting the cell inner membrane and disruption of ATP synthesis. The polypeptide is Small toxic polypeptide LdrB (ldrB) (Escherichia coli (strain K12)).